The chain runs to 604 residues: uncharacterized protein (604 aa).

The signal sequence occupies residues 1-40 (MWLQQRIKVFPGLLSSSWARRVLAVSGFLVIIYWYIFSGS). The Extracellular segment spans residues 41–563 (HYRSFWYSGK…EEHMAKQYRG (523 aa)). An N-linked (GlcNAc...) asparagine glycan is attached at Asn-337. Residues 564-584 (LPFLFWFSVASLITLFHLFLF) traverse the membrane as a helical segment. Residues 585–604 (KLIYNEYCGPGAKPLFRSKV) lie on the Cytoplasmic side of the membrane.

The protein resides in the membrane. This is an uncharacterized protein from Xenopus laevis (African clawed frog).